A 353-amino-acid chain; its full sequence is UPF0283 membrane protein YcjF (353 aa).

The segment covering 1-19 has biased composition (basic and acidic residues); that stretch reads MSEPLKPRIDFAEPLKEEP. Residues 1 to 35 form a disordered region; the sequence is MSEPLKPRIDFAEPLKEEPTSAFKAQQTFSEAESR. The next 3 helical transmembrane spans lie at 70–90, 100–120, and 213–233; these read MVMGGLALFGASVVGQGVQWT, VALGGCAAGALIVGAGVGSVV, and ESTLMIAVSPLALVDMAFIAW.

Belongs to the UPF0283 family.

The protein localises to the cell inner membrane. In Salmonella paratyphi B (strain ATCC BAA-1250 / SPB7), this protein is UPF0283 membrane protein YcjF.